The sequence spans 246 residues: Probable maleylacetoacetate isomerase 1 (246 aa).

Residues 32–116 (TKPILYSYWP…YLEETRPQPA (85 aa)) form the GST N-terminal domain. Residues 42 to 47 (SSCSWR), Val-88, 100 to 101 (DS), Gln-140, and 144 to 146 (NVS) each bind glutathione. The 121-residue stretch at 121–241 (DPVKRAKIRE…HPSTQPDCPP (121 aa)) folds into the GST C-terminal domain.

The protein belongs to the GST superfamily. Zeta family. Glutathione serves as cofactor.

It localises to the cytoplasm. It catalyses the reaction 4-maleylacetoacetate = 4-fumarylacetoacetate. The catalysed reaction is RX + glutathione = an S-substituted glutathione + a halide anion + H(+). The protein operates within amino-acid degradation; L-phenylalanine degradation; acetoacetate and fumarate from L-phenylalanine: step 5/6. Catalyzes the glutathione dependent oxygenation of dichloroacetic acid to glyoxylic acid in vitro. Possesses low glutathione thioltransferase activity toward 4-hydroxynonenal (4-HNE). Has no glutathione thioltransferase activity with adrenochrome, phenethyl isothiocyanate (PEITC), 5-hydroperoxyeicosatetraenoic acid ((5S)-HpETE), prostaglandin A2 (PGA2) or 2-hydroxyethyldisulfide (HED). The sequence is that of Probable maleylacetoacetate isomerase 1 (GstZ1) from Drosophila melanogaster (Fruit fly).